A 221-amino-acid polypeptide reads, in one-letter code: Octanoyltransferase (221 aa).

In terms of domain architecture, BPL/LPL catalytic spans 31–213; the sequence is DKSADEIWLV…HFVTILGYNK (183 aa). Substrate-binding positions include 70-77, 142-144, and 155-157; these read RGGQITYH, SLG, and GLA. The active-site Acyl-thioester intermediate is the Cys173.

This sequence belongs to the LipB family.

It is found in the cytoplasm. The enzyme catalyses octanoyl-[ACP] + L-lysyl-[protein] = N(6)-octanoyl-L-lysyl-[protein] + holo-[ACP] + H(+). It participates in protein modification; protein lipoylation via endogenous pathway; protein N(6)-(lipoyl)lysine from octanoyl-[acyl-carrier-protein]: step 1/2. Its function is as follows. Catalyzes the transfer of endogenously produced octanoic acid from octanoyl-acyl-carrier-protein onto the lipoyl domains of lipoate-dependent enzymes. Lipoyl-ACP can also act as a substrate although octanoyl-ACP is likely to be the physiological substrate. The sequence is that of Octanoyltransferase from Mannheimia succiniciproducens (strain KCTC 0769BP / MBEL55E).